The sequence spans 261 residues: Carbonic anhydrase 1 (261 aa).

A2 carries the post-translational modification N-acetylalanine. One can recognise an Alpha-carbonic anhydrase domain in the interval 4–261; that stretch reads PDWGYDGENG…LKGRTVKASF (258 aa). A disordered region spans residues 22 to 41; that stretch reads PIANGNNQSPIDIKTSETKR. H65 acts as the Proton donor/acceptor in catalysis. Zn(2+)-binding residues include H95, H97, and H120. Residues T200 and 200–201 each bind substrate; that span reads TH.

This sequence belongs to the alpha-carbonic anhydrase family. The cofactor is Zn(2+).

The protein localises to the cytoplasm. It catalyses the reaction hydrogencarbonate + H(+) = CO2 + H2O. The catalysed reaction is urea = cyanamide + H2O. Inhibited by acetazolamide. In terms of biological role, catalyzes the reversible hydration of carbon dioxide. Can hydrate cyanamide to urea. The polypeptide is Carbonic anhydrase 1 (CA1) (Ovis aries (Sheep)).